The primary structure comprises 397 residues: Elongation factor Tu (397 aa).

A tr-type G domain is found at 10 to 206 (KPHVNIGTIG…AVDTYIPTPE (197 aa)). The G1 stretch occupies residues 19-26 (GHVDHGKT). 19-26 (GHVDHGKT) lines the GTP pocket. Residue Thr26 coordinates Mg(2+). The segment at 60–64 (GITIN) is G2. Positions 81–84 (DCPG) are G3. GTP-binding positions include 81 to 85 (DCPGH) and 136 to 139 (NKSD). A G4 region spans residues 136-139 (NKSD). The interval 174-176 (SAL) is G5.

The protein belongs to the TRAFAC class translation factor GTPase superfamily. Classic translation factor GTPase family. EF-Tu/EF-1A subfamily. Monomer.

It is found in the cytoplasm. It catalyses the reaction GTP + H2O = GDP + phosphate + H(+). Functionally, GTP hydrolase that promotes the GTP-dependent binding of aminoacyl-tRNA to the A-site of ribosomes during protein biosynthesis. This Clostridium kluyveri (strain ATCC 8527 / DSM 555 / NBRC 12016 / NCIMB 10680 / K1) protein is Elongation factor Tu.